The sequence spans 391 residues: MAVAAMAERGRLSHAAPAPSTEGLPRAFLQSLRTLFDILDDRQRGYVHLREIESRWQGADARELPCGVLEGLRQVAPANGYLTFERFVAGLRTSLLKADGGQRDQARVAARPGDQSSLQQRLMFAPADEPRTVLERKPLPLSACPASGGPSGTSRNPELLCVPVEAASCPTETERPLSKALEQIPSADLGAAACKTLGKGTGEARQAPRARGERRRHTITNGVDCSLLKQMKELDQEQEVLLQGLEMMARGRDWYQQQLQRVQERQRRLSQSRAAADFGAEGSPRPLGRLLPKVQEVARCLGELLTAACSGRALPSSSLGPLGPPSPSTPVWQQQTILMLKEQNRLLTQEVTDKSERITQLEQEKSALIKQLFEARALSQQDSGPLDSTFI.

Residues 1-20 (MAVAAMAERGRLSHAAPAPS) are disordered. A Phosphothreonine modification is found at Thr-218. The stretch at 226 to 277 (SLLKQMKELDQEQEVLLQGLEMMARGRDWYQQQLQRVQERQRRLSQSRAAAD) forms a coiled coil. A Phosphoserine modification is found at Ser-283. The stretch at 340–381 (LKEQNRLLTQEVTDKSERITQLEQEKSALIKQLFEARALSQQ) forms a coiled coil.

Interacts with a spindle orientation complex at least composed of GNAI1, GPSM2 and NUMA1. Interacts with GPSM2 (via TPR motifs); this interaction is required to prevent GPSM2 anchoring at the mitotic apical cortex and is inhibited in presence of NUMA1 in a dose dependent manner. Interacts with PARD3. In terms of tissue distribution, expressed in the retina. Expressed in retinal progenitor cells and newly differentiated neurons but not in mature retinal cells (at protein level).

Its subcellular location is the cytoplasm. It localises to the nucleus. The protein resides in the cell cortex. The protein localises to the apical cell membrane. It is found in the cell junction. Its subcellular location is the tight junction. In terms of biological role, plays a role in planar mitotic spindle orientation in retinal progenitor cells (RPCs) and promotes the production of symmetric terminal divisions. Negatively regulates the mitotic apical cortex localization of GPSM2. Involved also in positive regulation of cell proliferation and tumor cell growth. The protein is Suppressor APC domain-containing protein 2 of Mus musculus (Mouse).